The primary structure comprises 78 residues: Protein Class8-like (78 aa).

The N-terminal stretch at 1 to 19 is a signal peptide; the sequence is MRTLVVLLIGAVLLCSANA. Residues 20–36 constitute a propeptide that is removed on maturation; the sequence is FLDELLAESVNDMTDKR. The ShKT domain maps to 38–78; sequence CFDKYKSNICGGVISPAHCVRRSGRMAKFAKENCAHFCGFC. Disulfide bonds link Cys38-Cys78, Cys47-Cys71, and Cys56-Cys75.

Expressed in ganglion neurons residing in the mesoglea (observed in both planulae and primary polyps). Not expressed in nematocytes.

Probable neuropeptide. The chain is Protein Class8-like from Nematostella vectensis (Starlet sea anemone).